The following is a 220-amino-acid chain: Probable pterin-4-alpha-carbinolamine dehydratase, chloroplastic (220 aa).

The N-terminal 50 residues, 1–50 (MAATSSSPPCNISASSLLLRQPSRSILKVFGLLPPVSRNNRKLGRLTVTR), are a transit peptide targeting the chloroplast.

This sequence belongs to the pterin-4-alpha-carbinolamine dehydratase family. As to quaternary structure, interacts with SDIR1. Interacts with AIRP2. In terms of processing, ubiquitinated by SDIR1. Ubiquitination leads to its subsequent degradation, thus controlling abscisic acid (ABA) signaling. Ubiquitinated by AIRP2. Ubiquitination leads to its subsequent degradation, thus controlling abscisic acid (ABA) signaling during drought stress.

It localises to the plastid. It is found in the chloroplast. Its subcellular location is the cell membrane. The protein resides in the nucleus. The catalysed reaction is (4aS,6R)-4a-hydroxy-L-erythro-5,6,7,8-tetrahydrobiopterin = (6R)-L-erythro-6,7-dihydrobiopterin + H2O. Its function is as follows. Involved in tetrahydrobiopterin biosynthesis. Interacts with and acts downstream of the E3 ubiquitin-protein ligase SDIR1 in abscisic acid (ABA) and salt stress signaling. Regulates the expression of the bZIP transcription factor ABI5, which mediates responses to ABA during seed germination and salt stress. The SDIR1-ATP1/SDIRIP1 complex plays an important role in ABA signaling through the ubiquitination pathway. Acts downstream of AIRP2 in regulation of ABA signaling during drought stress. The sequence is that of Probable pterin-4-alpha-carbinolamine dehydratase, chloroplastic from Arabidopsis thaliana (Mouse-ear cress).